Consider the following 446-residue polypeptide: 3-phosphoshikimate 1-carboxyvinyltransferase (446 aa).

3-phosphoshikimate-binding residues include lysine 27, serine 28, and arginine 32. Lysine 27 contributes to the phosphoenolpyruvate binding site. 2 residues coordinate phosphoenolpyruvate: glycine 100 and arginine 128. 3-phosphoshikimate is bound by residues serine 177, glutamine 179, aspartate 330, and lysine 357. Glutamine 179 is a binding site for phosphoenolpyruvate. Residue aspartate 330 is the Proton acceptor of the active site. Positions 361 and 406 each coordinate phosphoenolpyruvate.

Belongs to the EPSP synthase family. Monomer.

The protein localises to the cytoplasm. The enzyme catalyses 3-phosphoshikimate + phosphoenolpyruvate = 5-O-(1-carboxyvinyl)-3-phosphoshikimate + phosphate. It participates in metabolic intermediate biosynthesis; chorismate biosynthesis; chorismate from D-erythrose 4-phosphate and phosphoenolpyruvate: step 6/7. Its function is as follows. Catalyzes the transfer of the enolpyruvyl moiety of phosphoenolpyruvate (PEP) to the 5-hydroxyl of shikimate-3-phosphate (S3P) to produce enolpyruvyl shikimate-3-phosphate and inorganic phosphate. In Sphingopyxis alaskensis (strain DSM 13593 / LMG 18877 / RB2256) (Sphingomonas alaskensis), this protein is 3-phosphoshikimate 1-carboxyvinyltransferase.